The following is a 651-amino-acid chain: Protein numb homolog (651 aa).

One can recognise a PID domain in the interval 33-193; sequence RTGKCSFPVK…ASRTTFTREG (161 aa). Position 102 is a phosphothreonine; by AAK1 (Thr-102). A Phosphoserine modification is found at Ser-194. Residues 228–255 form a disordered region; it reads SSVAPGNTAPSPSSPTSPTSDATTSLEM. Low complexity predominate over residues 235-252; sequence TAPSPSSPTSPTSDATTS. Thr-243 carries the post-translational modification Phosphothreonine. The residue at position 244 (Ser-244) is a Phosphoserine. Phosphoserine; by CaMK1 occurs at positions 276 and 295. Disordered regions lie at residues 419-483 and 623-651; these read QSSG…SPFQ and LENK…EIEL. Residue Ser-425 is modified to Phosphoserine. Thr-436 carries the post-translational modification Phosphothreonine. Basic and acidic residues predominate over residues 436-449; it reads TPSEADRWLEEVSK. Residue Ser-438 is modified to Phosphoserine. Positions 453–466 are enriched in low complexity; the sequence is AQQPQASAAPLQPV. A compositionally biased stretch (polar residues) spans 630 to 644; that stretch reads RTNPSPTNPFSSDLQ. Phosphoserine is present on Ser-634.

Interacts with SIAH1. Interacts with LNX. Interacts with CDH1. Interacts with TFAP2A and TFAP2B. Interacts with RALBP1 in a complex also containing EPN1 and TFAP2A during interphase and mitosis. Interacts with AAK1. May interact with DUOXA1. Phosphorylated on Ser-276 and Ser-295 by CaMK1. In terms of processing, isoform 1 and isoform 2 are ubiquitinated by LNX leading to their subsequent proteasomal degradation. Ubiquitinated; mediated by SIAH1 and leading to its subsequent proteasomal degradation.

Its subcellular location is the cell membrane. It is found in the endosome membrane. Functionally, regulates clathrin-mediated receptor endocytosis. Plays a role in the process of neurogenesis. Required throughout embryonic neurogenesis to maintain neural progenitor cells, also called radial glial cells (RGCs), by allowing their daughter cells to choose progenitor over neuronal cell fate. Not required for the proliferation of neural progenitor cells before the onset of neurogenesis. Also involved postnatally in the subventricular zone (SVZ) neurogenesis by regulating SVZ neuroblasts survival and ependymal wall integrity. May also mediate local repair of brain ventricular wall damage. This is Protein numb homolog from Homo sapiens (Human).